We begin with the raw amino-acid sequence, 338 residues long: MLISQRPTLTEEFIDSSRSKFIIEPLEPGFGYTLGNSLRRTLLSSIPGAAVTSVKIDGVLHEFTTINGIKEDVSDIILNIKGLVLSSDSDEPVIMHLSKEGPGVVTAGDIEPPADVEIHNPDLHIATLNENAKLDIELIVERGRGYVPATMTATGGDIGRIPVDQIYSPVLKVSYKVEATRVEQRTDFDKLIIDVETKNSISARDALASAGKTLVELFGLARELNVAAEGIEIGPSPQETEYIAAYSMPIEDLDFSVRSYNCLKREDIHTVGELAERAESDLLDIRNFGQKSINEVKIKLAGLGLTLKDAPEDFDPSTLEGYDAETGGYIDVEPEDAE.

An alpha N-terminal domain (alpha-NTD) region spans residues 1-225 (MLISQRPTLT…ELFGLARELN (225 aa)). Positions 242-338 (YIAAYSMPIE…YIDVEPEDAE (97 aa)) are alpha C-terminal domain (alpha-CTD). A disordered region spans residues 314-338 (FDPSTLEGYDAETGGYIDVEPEDAE).

It belongs to the RNA polymerase alpha chain family. In terms of assembly, homodimer. The RNAP catalytic core consists of 2 alpha, 1 beta, 1 beta' and 1 omega subunit. When a sigma factor is associated with the core the holoenzyme is formed, which can initiate transcription.

It carries out the reaction RNA(n) + a ribonucleoside 5'-triphosphate = RNA(n+1) + diphosphate. Its function is as follows. DNA-dependent RNA polymerase catalyzes the transcription of DNA into RNA using the four ribonucleoside triphosphates as substrates. The protein is DNA-directed RNA polymerase subunit alpha of Corynebacterium efficiens (strain DSM 44549 / YS-314 / AJ 12310 / JCM 11189 / NBRC 100395).